A 142-amino-acid polypeptide reads, in one-letter code: Transmembrane protein 170A (142 aa).

The Lumenal portion of the chain corresponds to 1–48; it reads MEGGGGGLGGEPGLLQQILSLRLVPRVGNVTDCQRATLCSFPEMWYGV. A glycan (N-linked (GlcNAc...) asparagine) is linked at Asn-29. Residues 49–69 traverse the membrane as a helical segment; it reads FLWALVSSLFFHIPAGLLALF. The Cytoplasmic segment spans residues 70–78; sequence TLRHHKYGR. Residues 79-99 form a helical membrane-spanning segment; that stretch reads FMSVGIFLMGVLGPISAGILT. The Lumenal segment spans residues 100 to 114; it reads SAAIAGVYKAAGKEM. A helical transmembrane segment spans residues 115–135; that stretch reads IPFEALVLGVGQTFCVLIVSF. The Cytoplasmic segment spans residues 136-142; that stretch reads LRILATL.

Belongs to the TMEM170 family.

It is found in the endoplasmic reticulum membrane. The protein resides in the nucleus envelope. Its function is as follows. May regulate membrane morphogenesis in the endoplasmic reticulum (ER) by promoting ER sheet formation at the expense of ER tubules. The chain is Transmembrane protein 170A (tmem170a) from Xenopus laevis (African clawed frog).